We begin with the raw amino-acid sequence, 241 residues long: 1-(5-phosphoribosyl)-5-[(5-phosphoribosylamino)methylideneamino] imidazole-4-carboxamide isomerase (241 aa).

Residue Asp7 is the Proton acceptor of the active site. Asp129 serves as the catalytic Proton donor.

This sequence belongs to the HisA/HisF family.

The protein localises to the cytoplasm. It carries out the reaction 1-(5-phospho-beta-D-ribosyl)-5-[(5-phospho-beta-D-ribosylamino)methylideneamino]imidazole-4-carboxamide = 5-[(5-phospho-1-deoxy-D-ribulos-1-ylimino)methylamino]-1-(5-phospho-beta-D-ribosyl)imidazole-4-carboxamide. The protein operates within amino-acid biosynthesis; L-histidine biosynthesis; L-histidine from 5-phospho-alpha-D-ribose 1-diphosphate: step 4/9. This Buchnera aphidicola subsp. Baizongia pistaciae (strain Bp) protein is 1-(5-phosphoribosyl)-5-[(5-phosphoribosylamino)methylideneamino] imidazole-4-carboxamide isomerase.